A 145-amino-acid polypeptide reads, in one-letter code: Lipoprotein signal peptidase (145 aa).

2 consecutive transmembrane segments (helical) span residues 57-77 (LFFIVITVVVGIVLIYSMIKL) and 79-99 (ENSLYNYTLAMILGGAIGNLI). Residues aspartate 109 and aspartate 124 contribute to the active site. The helical transmembrane segment at 120-140 (FNVADSFIVVGAIILGYLMIF) threads the bilayer.

It belongs to the peptidase A8 family.

The protein localises to the cell membrane. It catalyses the reaction Release of signal peptides from bacterial membrane prolipoproteins. Hydrolyzes -Xaa-Yaa-Zaa-|-(S,diacylglyceryl)Cys-, in which Xaa is hydrophobic (preferably Leu), and Yaa (Ala or Ser) and Zaa (Gly or Ala) have small, neutral side chains.. It functions in the pathway protein modification; lipoprotein biosynthesis (signal peptide cleavage). Functionally, this protein specifically catalyzes the removal of signal peptides from prolipoproteins. The sequence is that of Lipoprotein signal peptidase from Caldanaerobacter subterraneus subsp. tengcongensis (strain DSM 15242 / JCM 11007 / NBRC 100824 / MB4) (Thermoanaerobacter tengcongensis).